We begin with the raw amino-acid sequence, 137 residues long: Acidic phospholipase A2 PL-II (137 aa).

Residues 1–17 (AVCVSLLGASSIRPLPL) form the signal peptide. 7 disulfide bridges follow: Cys-28–Cys-89, Cys-44–Cys-136, Cys-46–Cys-62, Cys-61–Cys-117, Cys-68–Cys-110, Cys-78–Cys-103, and Cys-96–Cys-108. Ca(2+)-binding residues include Tyr-45, Gly-47, and Gly-49. Residue His-65 is part of the active site. Asp-66 contacts Ca(2+). Residue Asp-111 is part of the active site.

Requires Ca(2+) as cofactor. As to expression, expressed by the venom gland.

It localises to the secreted. It catalyses the reaction a 1,2-diacyl-sn-glycero-3-phosphocholine + H2O = a 1-acyl-sn-glycero-3-phosphocholine + a fatty acid + H(+). Its function is as follows. Snake venom phospholipase A2 (PLA2) that may act in the hemostasis system of the prey. Exhibits hydrolytic activities, and prefers the anionic micelles (dPPC with deoxycholate) (54 umol/mg/min) to the zwitterionic micelles (dPPC with Triton X-100) (15 umol/mg/min). PLA2 catalyzes the calcium-dependent hydrolysis of the 2-acyl groups in 3-sn-phosphoglycerides. This is Acidic phospholipase A2 PL-II from Walterinnesia aegyptia (Desert black snake).